The following is a 449-amino-acid chain: uncharacterized protein (449 aa).

Basic residues predominate over residues 1-13 (MPKAPKTKLHHAP). The tract at residues 1–125 (MPKAPKTKLH…SQEEEEYEEL (125 aa)) is disordered. Ser22 carries the phosphoserine modification. The span at 73-84 (KPSQISAFISNG) shows a compositional bias: polar residues. Ser156 is modified (phosphoserine).

It belongs to the bystin family.

This is an uncharacterized protein from Schizosaccharomyces pombe (strain 972 / ATCC 24843) (Fission yeast).